The chain runs to 83 residues: Exodeoxyribonuclease 7 small subunit (83 aa).

It belongs to the XseB family. Heterooligomer composed of large and small subunits.

Its subcellular location is the cytoplasm. The catalysed reaction is Exonucleolytic cleavage in either 5'- to 3'- or 3'- to 5'-direction to yield nucleoside 5'-phosphates.. In terms of biological role, bidirectionally degrades single-stranded DNA into large acid-insoluble oligonucleotides, which are then degraded further into small acid-soluble oligonucleotides. The protein is Exodeoxyribonuclease 7 small subunit of Afipia carboxidovorans (strain ATCC 49405 / DSM 1227 / KCTC 32145 / OM5) (Oligotropha carboxidovorans).